The sequence spans 510 residues: NAD(P)H-quinone oxidoreductase subunit 2 B, chloroplastic (510 aa).

13 consecutive transmembrane segments (helical) span residues 24–44 (LLLF…GLIL), 59–79 (WFYF…LFRW), 99–119 (IFQF…VEYI), 124–144 (MAIT…MFLC), 149–169 (LITI…LSGY), 184–204 (LLMG…LYGL), 229–249 (ISIA…LAPF), 262–284 (TPVV…TRIF), 295–315 (WHLL…LIAI), 323–343 (MLAY…IVGD), 354–374 (YMLF…LFGL), 395–415 (ALSL…AGFF), and 418–438 (LHLF…IGLL).

It belongs to the complex I subunit 2 family. NDH is composed of at least 16 different subunits, 5 of which are encoded in the nucleus.

It localises to the plastid. Its subcellular location is the chloroplast thylakoid membrane. The enzyme catalyses a plastoquinone + NADH + (n+1) H(+)(in) = a plastoquinol + NAD(+) + n H(+)(out). The catalysed reaction is a plastoquinone + NADPH + (n+1) H(+)(in) = a plastoquinol + NADP(+) + n H(+)(out). Functionally, NDH shuttles electrons from NAD(P)H:plastoquinone, via FMN and iron-sulfur (Fe-S) centers, to quinones in the photosynthetic chain and possibly in a chloroplast respiratory chain. The immediate electron acceptor for the enzyme in this species is believed to be plastoquinone. Couples the redox reaction to proton translocation, and thus conserves the redox energy in a proton gradient. The sequence is that of NAD(P)H-quinone oxidoreductase subunit 2 B, chloroplastic from Lemna minor (Common duckweed).